Reading from the N-terminus, the 190-residue chain is Xanthine phosphoribosyltransferase (190 aa).

Residues L20 and N27 each contribute to the xanthine site. Residue 128–132 (ANGKA) coordinates 5-phospho-alpha-D-ribose 1-diphosphate. A xanthine-binding site is contributed by K156.

The protein belongs to the purine/pyrimidine phosphoribosyltransferase family. Xpt subfamily. As to quaternary structure, homodimer.

It is found in the cytoplasm. It catalyses the reaction XMP + diphosphate = xanthine + 5-phospho-alpha-D-ribose 1-diphosphate. It functions in the pathway purine metabolism; XMP biosynthesis via salvage pathway; XMP from xanthine: step 1/1. Its function is as follows. Converts the preformed base xanthine, a product of nucleic acid breakdown, to xanthosine 5'-monophosphate (XMP), so it can be reused for RNA or DNA synthesis. The polypeptide is Xanthine phosphoribosyltransferase (Pseudomonas fluorescens (strain Pf0-1)).